Reading from the N-terminus, the 788-residue chain is Choline transporter-like protein 1 (788 aa).

The helical transmembrane segment at 98-118 threads the bilayer; it reads FLFFVFLCGWVVVASLGIMWG. Asn276 carries N-linked (GlcNAc...) asparagine glycosylation. 4 helical membrane-spanning segments follow: residues 329-349, 352-372, 409-429, and 458-478; these read WWQTLILIFAAGMLSFIWTVI, LLGSLLIWLSIFLVLGALGFG, FVVAIATSVLLVIFLLVILFI, and LFPFLLHIGVFALWGSIAIWL. N-linked (GlcNAc...) asparagine glycosylation occurs at Asn497. Transmembrane regions (helical) follow at residues 531 to 551, 583 to 603, 620 to 640, 679 to 699, and 718 to 738; these read LFAFFWLSCFVTALGDIALAG, LGSIAFGSLIIAIVKIIRVML, WFLMCLKCCFWCLEMFFKFLT, AGILLFLGKAMITLGMGILSF, and YYFVPIVIVVIGSYFMADLFF.

It belongs to the CTL (choline transporter-like) family.

It is found in the membrane. The chain is Choline transporter-like protein 1 (chtl-1) from Caenorhabditis briggsae.